The sequence spans 234 residues: Transcriptional activator protein TraR (234 aa).

An HTH luxR-type domain is found at T167 to K232. The H-T-H motif DNA-binding region spans M191–R210.

The protein belongs to the autoinducer-regulated transcriptional regulatory protein family.

In terms of biological role, positive regulation of conjugal transfer of Ti plasmids. TraR activates target genes in the presence of AAI and also activates traR and traI themselves. This chain is Transcriptional activator protein TraR (traR), found in Rhizobium radiobacter (Agrobacterium tumefaciens).